The chain runs to 141 residues: Nucleoside diphosphate kinase (141 aa).

Positions 11, 59, 87, 93, 104, and 114 each coordinate ATP. Histidine 117 (pros-phosphohistidine intermediate) is an active-site residue.

Belongs to the NDK family. In terms of assembly, homotetramer. It depends on Mg(2+) as a cofactor.

Its subcellular location is the cytoplasm. The enzyme catalyses a 2'-deoxyribonucleoside 5'-diphosphate + ATP = a 2'-deoxyribonucleoside 5'-triphosphate + ADP. It catalyses the reaction a ribonucleoside 5'-diphosphate + ATP = a ribonucleoside 5'-triphosphate + ADP. Functionally, major role in the synthesis of nucleoside triphosphates other than ATP. The ATP gamma phosphate is transferred to the NDP beta phosphate via a ping-pong mechanism, using a phosphorylated active-site intermediate. In Mannheimia succiniciproducens (strain KCTC 0769BP / MBEL55E), this protein is Nucleoside diphosphate kinase.